A 1368-amino-acid chain; its full sequence is DNA-directed RNA polymerase subunit beta (1368 aa).

The protein belongs to the RNA polymerase beta chain family. In terms of assembly, the RNAP catalytic core consists of 2 alpha, 1 beta, 1 beta' and 1 omega subunit. When a sigma factor is associated with the core the holoenzyme is formed, which can initiate transcription.

The catalysed reaction is RNA(n) + a ribonucleoside 5'-triphosphate = RNA(n+1) + diphosphate. Functionally, DNA-dependent RNA polymerase catalyzes the transcription of DNA into RNA using the four ribonucleoside triphosphates as substrates. In Janthinobacterium sp. (strain Marseille) (Minibacterium massiliensis), this protein is DNA-directed RNA polymerase subunit beta.